The primary structure comprises 398 residues: uncharacterized protein (398 aa).

Positions 1 to 21 (MRKVGITLSVVALVIMGFVAG) are cleaved as a signal peptide. Cys-22 carries the post-translational modification N-acetylcysteine. The S-archaeol cysteine moiety is linked to residue Cys-22.

The protein belongs to the BMP lipoprotein family.

The protein resides in the cell membrane. This is an uncharacterized protein from Pyrococcus furiosus (strain ATCC 43587 / DSM 3638 / JCM 8422 / Vc1).